We begin with the raw amino-acid sequence, 206 residues long: Large ribosomal subunit protein mL40 (206 aa).

The transit peptide at 1–46 (MTASVLRSISLALRPTSGLLGTWQTQLRETHQRASLLSFWELIPMR) directs the protein to the mitochondrion. Residues 168-192 (LFPFEKEGPHYTPPIPNYQPPEGRY) form a disordered region.

Belongs to the mitochondrion-specific ribosomal protein mL40 family. Component of the mitochondrial large ribosomal subunit (mt-LSU). Mature mammalian 55S mitochondrial ribosomes consist of a small (28S) and a large (39S) subunit. The 28S small subunit contains a 12S ribosomal RNA (12S mt-rRNA) and 30 different proteins. The 39S large subunit contains a 16S rRNA (16S mt-rRNA), a copy of mitochondrial valine transfer RNA (mt-tRNA(Val)), which plays an integral structural role, and 52 different proteins. mL40 binds to the major groove of the anticodon stem of mt-tRNA(Val) in the central protuberance. In terms of tissue distribution, ubiquitous.

It localises to the mitochondrion. In Homo sapiens (Human), this protein is Large ribosomal subunit protein mL40 (MRPL40).